The sequence spans 506 residues: RNA-splicing ligase RtcB homolog (506 aa).

Residues Asp-120, Cys-123, His-228, His-260, and His-354 each contribute to the Mn(2+) site. 227-231 (NHYAE) contributes to the GMP binding site. Residues 354 to 355 (HN), 403 to 406 (GGSM), Ser-410, 429 to 432 (HGAG), and Lys-505 contribute to the GMP site. His-429 (GMP-histidine intermediate) is an active-site residue.

The protein belongs to the RtcB family. As to quaternary structure, catalytic component of the tRNA-splicing ligase complex. Requires Mn(2+) as cofactor.

It carries out the reaction a 3'-end 3'-phospho-ribonucleotide-RNA + a 5'-end dephospho-ribonucleoside-RNA + GTP = a ribonucleotidyl-ribonucleotide-RNA + GMP + diphosphate. The enzyme catalyses a 3'-end 2',3'-cyclophospho-ribonucleotide-RNA + a 5'-end dephospho-ribonucleoside-RNA + GTP + H2O = a ribonucleotidyl-ribonucleotide-RNA + GMP + diphosphate + H(+). In terms of biological role, catalytic subunit of the tRNA-splicing ligase complex that acts by directly joining spliced tRNA halves to mature-sized tRNAs by incorporating the precursor-derived splice junction phosphate into the mature tRNA as a canonical 3',5'-phosphodiester. May act as an RNA ligase with broad substrate specificity, and may function toward other RNAs. This chain is RNA-splicing ligase RtcB homolog, found in Aedes aegypti (Yellowfever mosquito).